The primary structure comprises 282 residues: Phosphate transport system permease protein PstA (282 aa).

6 helical membrane-spanning segments follow: residues 22–42 (LSYI…FTLI), 71–91 (LIGS…IGVL), 111–131 (FLND…VYSL), 136–156 (IEHF…IPIV), 198–218 (ILTG…PLLF), and 254–274 (NLAW…NIFT). Positions 71-274 (LIGSFFIVGA…LFVLCLNIFT (204 aa)) constitute an ABC transmembrane type-1 domain.

The protein belongs to the binding-protein-dependent transport system permease family. CysTW subfamily.

The protein localises to the cell inner membrane. Part of the binding-protein-dependent transport system for phosphate; probably responsible for the translocation of the substrate across the membrane. The sequence is that of Phosphate transport system permease protein PstA (pstA) from Haemophilus influenzae (strain ATCC 51907 / DSM 11121 / KW20 / Rd).